The sequence spans 285 residues: Bifunctional protein FolD (285 aa).

NADP(+) contacts are provided by residues 166–168 (GAS) and I232.

Belongs to the tetrahydrofolate dehydrogenase/cyclohydrolase family. Homodimer.

The catalysed reaction is (6R)-5,10-methylene-5,6,7,8-tetrahydrofolate + NADP(+) = (6R)-5,10-methenyltetrahydrofolate + NADPH. The enzyme catalyses (6R)-5,10-methenyltetrahydrofolate + H2O = (6R)-10-formyltetrahydrofolate + H(+). It participates in one-carbon metabolism; tetrahydrofolate interconversion. Functionally, catalyzes the oxidation of 5,10-methylenetetrahydrofolate to 5,10-methenyltetrahydrofolate and then the hydrolysis of 5,10-methenyltetrahydrofolate to 10-formyltetrahydrofolate. The protein is Bifunctional protein FolD of Photobacterium profundum (strain SS9).